The sequence spans 247 residues: Cell division protein ZapD (247 aa).

This sequence belongs to the ZapD family. Interacts with FtsZ.

The protein resides in the cytoplasm. Its function is as follows. Cell division factor that enhances FtsZ-ring assembly. Directly interacts with FtsZ and promotes bundling of FtsZ protofilaments, with a reduction in FtsZ GTPase activity. The sequence is that of Cell division protein ZapD from Salmonella choleraesuis (strain SC-B67).